The following is a 146-amino-acid chain: Cytochrome c-type biogenesis protein CcmE (146 aa).

Residues 1–8 lie on the Cytoplasmic side of the membrane; it reads MHPKRKKR. The chain crosses the membrane as a helical; Signal-anchor for type II membrane protein span at residues 9–29; sequence LLIVLAGLAVVAVASGLILNA. Topologically, residues 30 to 146 are periplasmic; sequence FRSNLVFFHT…IQRAGETVVQ (117 aa). Heme contacts are provided by His-124 and Tyr-128.

It belongs to the CcmE/CycJ family.

Its subcellular location is the cell inner membrane. Its function is as follows. Heme chaperone required for the biogenesis of c-type cytochromes. Transiently binds heme delivered by CcmC and transfers the heme to apo-cytochromes in a process facilitated by CcmF and CcmH. This chain is Cytochrome c-type biogenesis protein CcmE, found in Laribacter hongkongensis (strain HLHK9).